A 1972-amino-acid chain; its full sequence is Myosin-11 (1972 aa).

A phosphoserine mark is found at serine 8, serine 23, and serine 40. Residues 31–81 enclose the Myosin N-terminal SH3-like domain; it reads AAKRLVWVPSEKQGFEAASIKEEKGDEVVVELVENGKKVTVGKDDIQKMNP. Residues 85–783 enclose the Myosin motor domain; it reads SKVEDMAELT…VLAHLEEERD (699 aa). An N6,N6,N6-trimethyllysine modification is found at lysine 129. 178-185 serves as a coordination point for ATP; it reads GESGAGKT. Actin-binding stretches follow at residues 661–683 and 762–776; these read LGKLMTTLRNTTPNFVRCIIPNH and RIGQSKIFFRTGVLA. The 30-residue stretch at 786-815 folds into the IQ domain; the sequence is ITDVIMAFQAMCRGYLARKAFAKRQQQLTA. The stretch at 844–1934 forms a coiled coil; that stretch reads LLQVTRQEEE…KSKLRRGNET (1091 aa). A disordered region spans residues 858 to 882; the sequence is EDELQKTKERQQKAENELKELEQKH. Threonine 1177 carries the phosphothreonine modification. 2 positions are modified to phosphoserine: serine 1684 and serine 1722. 2 disordered regions span residues 1744–1800 and 1866–1972; these read ELEE…LRSK and EQYK…KASE. A compositionally biased stretch (polar residues) spans 1762 to 1788; that stretch reads ATQQAEQLSNELATERSTAQKNESARQ. 2 stretches are compositionally biased toward basic and acidic residues: residues 1789–1800 and 1866–1876; these read QLERQNKELRSK and EQYKEQAEKGN. The segment at 1935–1972 is C-terminal; it reads SFVPSRRSGGRRVIENADGSEEETDTRDADFNGTKASE. Serine 1954 is modified (phosphoserine). At threonine 1958 the chain carries Phosphothreonine. Serine 1971 is subject to Phosphoserine.

This sequence belongs to the TRAFAC class myosin-kinesin ATPase superfamily. Myosin family. In terms of assembly, muscle myosin is a hexameric protein that consists of 2 heavy chain subunits (MHC), 2 alkali light chain subunits (MLC) and 2 regulatory light chain subunits (MLC-2). As to expression, smooth muscle; expressed in the umbilical artery, bladder, esophagus and trachea. Isoform 1 is mostly found in slowly contracting tonic muscles.

The protein localises to the melanosome. Functionally, muscle contraction. The protein is Myosin-11 (MYH11) of Homo sapiens (Human).